We begin with the raw amino-acid sequence, 393 residues long: MTEEFNESMINDIKEGDKVTGEVQEIEEKQVIVAVNGAKFNGIIPISQLSTHHIDNPSDAVKVGDEIGAYVTKVEYDEENETGAYILSKRQLETEKSYEFLQEQLDNNQTIEAKVTEVVKGGLVVDVGQRGFVPASLISTDFIEDFSDFEGQVLKLKVEELDPANNRVILSRKAVEALENAEKKDELLESLNEGDVIEGKVARLTNFGAFVDIGGVDGLVHVSELSHEHVKSPEDVVSIGETVNVKIKSVDKDSERISLSIKDTLPSPFESIKGEFNEGDVIEGTVVRLANFGAFVEIKPGVQGLVHISEISHSHIGSPSEALEPGQVVSVKVLGVDVENERISLSIKATLPNENVIESDSETTQSYLDNGSDDEDNPTLGDVFGDKLKDFKF.

4 consecutive S1 motif domains span residues Gly16 to Arg90, Asn108 to Lys173, Gly194 to Lys262, and Gly279 to Lys348. Polar residues predominate over residues Val356–Asp369. Positions Val356 to Gly381 are disordered.

It belongs to the bacterial ribosomal protein bS1 family.

Functionally, binds mRNA; thus facilitating recognition of the initiation point. It is needed to translate mRNA with a short Shine-Dalgarno (SD) purine-rich sequence. This Staphylococcus saprophyticus subsp. saprophyticus (strain ATCC 15305 / DSM 20229 / NCIMB 8711 / NCTC 7292 / S-41) protein is Small ribosomal subunit protein bS1 (rpsA).